A 264-amino-acid chain; its full sequence is Low molecular mass lipoprotein PBMHPC-23 (264 aa).

The N-terminal stretch at Met-1 to Ala-23 is a signal peptide.

It belongs to the 30 kDa lipoprotein family.

The protein resides in the secreted. The chain is Low molecular mass lipoprotein PBMHPC-23 from Bombyx mori (Silk moth).